The sequence spans 308 residues: MQKVVAIVGPTAVGKTSLAIEIAKKLDGEIVSGDSMQIYKEVAIGTAKASREEQAEVKHYLVDAHSVFEDFSVKNFVDEARSAIGEIAGKGKLPIIAGGTGFYVNALLNDMQLGDKEEEAASVDPEWEVFLAANGPQALWEELNKKDPEAAKKIPVANSRRSLRALSVISRTGGLFSKQQAEIKTRYDYLIIGLNSDREAIYQRINQRVDLMMEAGLLEEARFVYEHRAGEHQVLQAIGYKEFFPYFAGEASLETCVMALKTASRRYAKRQLTYFRNKLPVEWYDPLTDPNCANRIAVRIEEWMKEEK.

ATP is bound at residue 9-16; that stretch reads GPTAVGKT. Position 11–16 (11–16) interacts with substrate; that stretch reads TAVGKT. The interaction with substrate tRNA stretch occupies residues 34–37; it reads DSMQ.

Belongs to the IPP transferase family. Monomer. It depends on Mg(2+) as a cofactor.

The catalysed reaction is adenosine(37) in tRNA + dimethylallyl diphosphate = N(6)-dimethylallyladenosine(37) in tRNA + diphosphate. Its function is as follows. Catalyzes the transfer of a dimethylallyl group onto the adenine at position 37 in tRNAs that read codons beginning with uridine, leading to the formation of N6-(dimethylallyl)adenosine (i(6)A). In Lactobacillus delbrueckii subsp. bulgaricus (strain ATCC 11842 / DSM 20081 / BCRC 10696 / JCM 1002 / NBRC 13953 / NCIMB 11778 / NCTC 12712 / WDCM 00102 / Lb 14), this protein is tRNA dimethylallyltransferase.